The primary structure comprises 179 residues: Ribosome maturation factor RimM (179 aa).

The PRC barrel domain maps to 102-179; that stretch reads DGEYYWYQLE…EMKVEWDADF (78 aa).

The protein belongs to the RimM family. In terms of assembly, binds ribosomal protein uS19.

It localises to the cytoplasm. In terms of biological role, an accessory protein needed during the final step in the assembly of 30S ribosomal subunit, possibly for assembly of the head region. Essential for efficient processing of 16S rRNA. May be needed both before and after RbfA during the maturation of 16S rRNA. It has affinity for free ribosomal 30S subunits but not for 70S ribosomes. In Pseudomonas syringae pv. tomato (strain ATCC BAA-871 / DC3000), this protein is Ribosome maturation factor RimM.